Here is a 100-residue protein sequence, read N- to C-terminus: Small ribosomal subunit protein uS14c (100 aa).

Belongs to the universal ribosomal protein uS14 family. Part of the 30S ribosomal subunit.

The protein localises to the plastid. Its subcellular location is the chloroplast. Binds 16S rRNA, required for the assembly of 30S particles. This chain is Small ribosomal subunit protein uS14c, found in Cryptomeria japonica (Japanese cedar).